The primary structure comprises 549 residues: Copalyl diphosphate synthase (549 aa).

A DXDDTA motif motif is present at residues 321-326 (DADDTA). A QXXDGSW motif motif is present at residues 451-457 (QRDDGSW).

It belongs to the terpene synthase family. The cofactor is Mg(2+).

The enzyme catalyses (2E,6E,10E)-geranylgeranyl diphosphate = (+)-copalyl diphosphate. In terms of biological role, involved in the biosynthesis of the labdane-type bicyclic diterpene labda-8(17),12(E),14-triene. Catalyzes the conversion of geranylgeranyl diphosphate (GGDP) into (+)-copalyl diphosphate. This chain is Copalyl diphosphate synthase, found in Streptomyces anulatus (Streptomyces chrysomallus).